The following is a 601-amino-acid chain: Protein FAM13C (601 aa).

2 disordered regions span residues 82-134 (SMGN…PQSS) and 192-238 (DGQV…EDLQ). Positions 98–111 (ESGRNHGESQETEH) are enriched in basic and acidic residues. S130 is subject to Phosphoserine. Positions 200-217 (DPAPASTQSAPADSADPA) are enriched in low complexity. A Phosphoserine modification is found at S258. 3 disordered regions span residues 268–304 (QRFN…KEPQ), 327–352 (FEQE…WMND), and 366–485 (KLSE…DPVS). Over residues 282-294 (SSQQFMMPRSSSR) the composition is skewed to low complexity. Residues 327–342 (FEQEKKYRPSHGDKTS) are compositionally biased toward basic and acidic residues. Phosphoserine occurs at positions 405 and 406. The span at 415 to 446 (VPEKREQTPPQDDGKGTKQDKNLIKPLYDRCR) shows a compositional bias: basic and acidic residues. The span at 462–471 (QEEEDSDEDC) shows a compositional bias: acidic residues.

This sequence belongs to the FAM13 family.

The protein is Protein FAM13C (Fam13c) of Mus musculus (Mouse).